The primary structure comprises 224 residues: Ribonuclease 3 (224 aa).

The 123-residue stretch at 4–126 (LDRLQHKIGY…IIGAMSLDSN (123 aa)) folds into the RNase III domain. Glutamate 39 is a binding site for Mg(2+). Aspartate 43 is a catalytic residue. Residues aspartate 112 and glutamate 115 each coordinate Mg(2+). Glutamate 115 is an active-site residue. The 71-residue stretch at 153 to 223 (DPKTRLQEYL…AEQILKVLDI (71 aa)) folds into the DRBM domain.

It belongs to the ribonuclease III family. Homodimer. The cofactor is Mg(2+).

It is found in the cytoplasm. It carries out the reaction Endonucleolytic cleavage to 5'-phosphomonoester.. Its function is as follows. Digests double-stranded RNA. Involved in the processing of primary rRNA transcript to yield the immediate precursors to the large and small rRNAs (23S and 16S). Processes some mRNAs, and tRNAs when they are encoded in the rRNA operon. Processes pre-crRNA and tracrRNA of type II CRISPR loci if present in the organism. This is Ribonuclease 3 from Actinobacillus succinogenes (strain ATCC 55618 / DSM 22257 / CCUG 43843 / 130Z).